Reading from the N-terminus, the 448-residue chain is Chaperone SurA (448 aa).

An N-terminal signal peptide occupies residues 1-27; it reads MKKTLRFAAVAAGLVASLITVAPSASA. PpiC domains lie at 185-288 and 301-399; these read QQDL…RLVD and IVQT…QVLG. Residues 230 to 249 are disordered; it reads LAKSQSEADDAKKGGDLGFK.

It localises to the periplasm. It catalyses the reaction [protein]-peptidylproline (omega=180) = [protein]-peptidylproline (omega=0). Chaperone involved in the correct folding and assembly of outer membrane proteins. Recognizes specific patterns of aromatic residues and the orientation of their side chains, which are found more frequently in integral outer membrane proteins. May act in both early periplasmic and late outer membrane-associated steps of protein maturation. The sequence is that of Chaperone SurA from Burkholderia thailandensis (strain ATCC 700388 / DSM 13276 / CCUG 48851 / CIP 106301 / E264).